Here is a 480-residue protein sequence, read N- to C-terminus: CASP8 and FADD-like apoptosis regulator (480 aa).

DED domains lie at 1-73 and 92-170; these read MSAE…RILK and DYRV…KIQK. The interaction with CASP8 stretch occupies residues 1 to 195; that stretch reads MSAEVIHQVE…LQAAIQKSLK (195 aa). The interaction with FADD stretch occupies residues 1–227; it reads MSAEVIHQVE…GAQQEPVKKS (227 aa). The interaction with CASP8 propeptide stretch occupies residues 1-305; the sequence is MSAEVIHQVE…FACMPEHRDY (305 aa). The tract at residues 1–435 is not proteolytically processed and involved in apoptosis inhibition; the sequence is MSAEVIHQVE…CLSQKLRQER (435 aa). Residues 192–435 form an interaction with CASP3 region; that stretch reads KSLKDPSNNF…CLSQKLRQER (244 aa). The interval 192–480 is interaction with TRAF1 and TRAF2; it reads KSLKDPSNNF…LRKKLILSYT (289 aa). The interval 217–480 is interaction with CASP8 subunits p18 and p10; sequence LGAQQEPVKK…LRKKLILSYT (264 aa). A caspase region spans residues 263–358; it reads ETELLRDTFT…AGKPKMFFIQ (96 aa). Residues 370–480 are interaction with CASP8; the sequence is SSLLEVDGPA…LRKKLILSYT (111 aa).

The protein belongs to the peptidase C14A family. In terms of assembly, TNFRSF6 stimulation triggers recruitment to the death-inducing signaling complex (DISC) formed by TNFRSF6, FADD and CASP8. A proteolytic fragment (p43) stays associated with the DISC. Also interacts with FADD, CASP8, CASP3, TRAF1, TRAF2 and Bcl-X(L) (in vitro). Interacts with RIPK1. (Microbial infection) Interacts with HBV protein X. Proteolytically processed by CASP8 generating subunit p43 and p12. Widely expressed. Higher expression in skeletal muscle, pancreas, heart, kidney, placenta, and peripheral blood leukocytes. Also detected in diverse cell lines. Isoform 8 is predominantly expressed in testis and skeletal muscle.

In terms of biological role, apoptosis regulator protein which may function as a crucial link between cell survival and cell death pathways in mammalian cells. Acts as an inhibitor of TNFRSF6 mediated apoptosis. A proteolytic fragment (p43) is likely retained in the death-inducing signaling complex (DISC) thereby blocking further recruitment and processing of caspase-8 at the complex. Full length and shorter isoforms have been shown either to induce apoptosis or to reduce TNFRSF-triggered apoptosis. Lacks enzymatic (caspase) activity. This chain is CASP8 and FADD-like apoptosis regulator (CFLAR), found in Homo sapiens (Human).